The following is a 171-amino-acid chain: 16S rRNA aminocarboxypropyltransferase (171 aa).

T18, L68, L91, and S110 together coordinate S-adenosyl-L-methionine.

Belongs to the TDD superfamily. TSR3 family.

It is found in the cytoplasm. It catalyses the reaction an N(1)-methylpseudouridine in rRNA + S-adenosyl-L-methionine = N(1)-methyl-N(3)-[(3S)-3-amino-3-carboxypropyl]pseudouridine in rRNA + S-methyl-5'-thioadenosine + H(+). Aminocarboxypropyltransferase that catalyzes the aminocarboxypropyl transfer on pseudouridine corresponding to position 914 in M.jannaschii 16S rRNA. It constitutes the last step in biosynthesis of the hypermodified N1-methyl-N3-(3-amino-3-carboxypropyl) pseudouridine (m1acp3-Psi). This is 16S rRNA aminocarboxypropyltransferase from Methanosphaera stadtmanae (strain ATCC 43021 / DSM 3091 / JCM 11832 / MCB-3).